Consider the following 150-residue polypeptide: Aspartate 1-decarboxylase 1 (150 aa).

The Schiff-base intermediate with substrate; via pyruvic acid role is filled by Ser-24. Ser-24 is modified (pyruvic acid (Ser)). Substrate is bound at residue Thr-56. The active-site Proton donor is Tyr-57. Position 72–74 (72–74 (GAA)) interacts with substrate.

Belongs to the PanD family. As to quaternary structure, heterooctamer of four alpha and four beta subunits. Requires pyruvate as cofactor. In terms of processing, is synthesized initially as an inactive proenzyme, which is activated by self-cleavage at a specific serine bond to produce a beta-subunit with a hydroxyl group at its C-terminus and an alpha-subunit with a pyruvoyl group at its N-terminus.

It localises to the cytoplasm. The enzyme catalyses L-aspartate + H(+) = beta-alanine + CO2. Its pathway is cofactor biosynthesis; (R)-pantothenate biosynthesis; beta-alanine from L-aspartate: step 1/1. Catalyzes the pyruvoyl-dependent decarboxylation of aspartate to produce beta-alanine. This Mesorhizobium japonicum (strain LMG 29417 / CECT 9101 / MAFF 303099) (Mesorhizobium loti (strain MAFF 303099)) protein is Aspartate 1-decarboxylase 1.